We begin with the raw amino-acid sequence, 102 residues long: Small ribosomal subunit protein uS10 (102 aa).

This sequence belongs to the universal ribosomal protein uS10 family. In terms of assembly, part of the 30S ribosomal subunit.

In terms of biological role, involved in the binding of tRNA to the ribosomes. The polypeptide is Small ribosomal subunit protein uS10 (Carboxydothermus hydrogenoformans (strain ATCC BAA-161 / DSM 6008 / Z-2901)).